The following is a 272-amino-acid chain: Prohibitin 1 (272 aa).

Alanine 2 carries the N-acetylalanine modification. Residue threonine 91 is modified to Phosphothreonine. N6-acetyllysine is present on residues lysine 128 and lysine 186. Residues 177-211 are a coiled coil; that stretch reads KEFTEAVEAKQVAQQEAERARFVVEKAEQQKKAAI. Lysine 202 carries the N6-acetyllysine; alternate modification. An N6-succinyllysine; alternate modification is found at lysine 202. Tyrosine 249 carries the post-translational modification Phosphotyrosine.

This sequence belongs to the prohibitin family. As to quaternary structure, interacts with PHB2. Interacts with STOML2. Interacts with CD86 (via cytoplasmic domain); the interactions increases after priming with CD40. In terms of assembly, (Microbial infection) Interacts with human enterovirus 71/EV-71 capsid protein VP0, protein 3CD and protease 3C. In terms of tissue distribution, widely expressed in different tissues.

Its subcellular location is the mitochondrion inner membrane. It is found in the nucleus. The protein localises to the cell membrane. It localises to the cytoplasm. Its activity is regulated as follows. Target of the anti-cancer drug Rocaglamide (Roc-A). In terms of biological role, protein with pleiotropic attributes mediated in a cell-compartment- and tissue-specific manner, which include the plasma membrane-associated cell signaling functions, mitochondrial chaperone, and transcriptional co-regulator of transcription factors in the nucleus. Plays a role in adipose tissue and glucose homeostasis in a sex-specific manner. Contributes to pulmonary vascular remodeling by accelerating proliferation of pulmonary arterial smooth muscle cells. Functionally, in the mitochondria, together with PHB2, forms large ring complexes (prohibitin complexes) in the inner mitochondrial membrane (IMM) and functions as a chaperone protein that stabilizes mitochondrial respiratory enzymes and maintains mitochondrial integrity in the IMM, which is required for mitochondrial morphogenesis, neuronal survival, and normal lifespan. The prohibitin complex, with DNAJC19, regulates cardiolipin remodeling and the protein turnover of OMA1 in a cardiolipin-binding manner. Regulates mitochondrial respiration activity playing a role in cellular aging. The prohibitin complex plays a role of mitophagy receptor involved in targeting mitochondria for autophagic degradation. Involved in mitochondrial-mediated antiviral innate immunity, activates RIG-I-mediated signal transduction and production of IFNB1 and pro-inflammatory cytokine IL6. In the nucleus, acts as a transcription coregulator, enhances promoter binding by TP53, a transcription factor it activates, but reduces the promoter binding by E2F1, a transcription factor it represses. Interacts with STAT3 to affect IL17 secretion in T-helper Th17 cells. Its function is as follows. In the plasma membrane, cooperates with CD86 to mediate CD86-signaling in B lymphocytes that regulates the level of IgG1 produced through the activation of distal signaling intermediates. Upon CD40 engagement, required to activate NF-kappa-B signaling pathway via phospholipase C and protein kinase C activation. In terms of biological role, (Microbial infection) In neuronal cells, cell surface-expressed PHB1 is involved in human enterovirus 71/EV-71 entry into neuronal cells specifically, while membrane-bound mitochondrial PHB1 associates with the virus replication complex and facilitates viral replication. May serve as a receptor for EV71. In Mus musculus (Mouse), this protein is Prohibitin 1 (Phb1).